A 450-amino-acid polypeptide reads, in one-letter code: MYCSQAITQTSRLPVSNNFYCKKTFFSSVNSNYQNLSQMQSWSSLKVLAFGLPDLHSIPVNLNNSFQEAIVISTINDNNIFADVTNSWIKMHKDKNHYSLFYKEIFKALLTKQIHVIDSPIGSKDIDNKIILIQQYIWKKGLKSPQFNSIARLNKNVDISNISTKFIMEQLSTSPVFVVKNGLNEIILGHPLSRIRRTAFNQIASSLSNLFHQPIATSPISNGLFFFHPDDAIEFKNFVQSKAPEACKDMDIKIQPVGLHVAYKMNRNFSSDIQFRFVPDFKEVGDLIFRHQQAKNLHFHENQYYGKNFFQGQPIYMIQPIIIKHRNGRISIIKFTGANDDREVVFTNLEAANKSWANFIKRTPYLKRLKKPNLLVYNLESFLKDKEVLHKADLTKFIVVTNKSAYITTKESVTLPYHNGLSKHLELNVKPKLFFVKLWIRRLLFTLTYE.

Belongs to the ycf80 family.

Its subcellular location is the plastid. It localises to the chloroplast. This is an uncharacterized protein from Porphyra purpurea (Red seaweed).